The following is a 347-amino-acid chain: Protein RecA (347 aa).

67-74 (GPESSGKT) is a binding site for ATP.

The protein belongs to the RecA family.

It is found in the cytoplasm. Its function is as follows. Can catalyze the hydrolysis of ATP in the presence of single-stranded DNA, the ATP-dependent uptake of single-stranded DNA by duplex DNA, and the ATP-dependent hybridization of homologous single-stranded DNAs. It interacts with LexA causing its activation and leading to its autocatalytic cleavage. This chain is Protein RecA, found in Helicobacter pylori (strain HPAG1).